A 935-amino-acid polypeptide reads, in one-letter code: Progesterone receptor (935 aa).

An AF3; mediates transcriptional activation region spans residues 1 to 164 (MTELKAKGPR…PATQRVLSPL (164 aa)). Positions 1 to 256 (MTELKAKGPR…AAAGGGAAAV (256 aa)) are disordered. A modulating, Pro-Rich region spans residues 1 to 568 (MTELKAKGPR…YSFESLPQKI (568 aa)). Serine 20 carries the post-translational modification Phosphoserine. The LXXL motif 1 motif lies at 55-59 (LDGLL). Position 81 is a phosphoserine (serine 81). The short motif at 115 to 119 (LDTLL) is the LXXL motif 2 element. A phosphoserine mark is found at serine 130 and serine 162. Residues 165-305 (MSRSGGKAGD…LATTTMDFTH (141 aa)) are mediates transcriptional transrepression. Residues 183-187 (KVLPR) carry the Nuclear localization signal motif. Serine 190 and serine 213 each carry phosphoserine. Residues 220–231 (EVEEEDGSESED) show a composition bias toward acidic residues. The span at 232 to 246 (SAGPLLKGKPRALGG) shows a compositional bias: low complexity. A Phosphoserine; by MAPK1 modification is found at serine 294. Residues 328 to 353 (SYDGGAGAASAFAPPRSSPSASSTPV) form a disordered region. Residues 335-350 (AASAFAPPRSSPSASS) are compositionally biased toward low complexity. Phosphoserine; by MAPK is present on serine 345. Lysine 388 is covalently cross-linked (Glycyl lysine isopeptide (Lys-Gly) (interchain with G-Cter in SUMO); alternate). Lysine 388 participates in a covalent cross-link: Glycyl lysine isopeptide (Lys-Gly) (interchain with G-Cter in ubiquitin); alternate. At serine 400 the chain carries Phosphoserine; by CDK2. The segment at 415 to 452 (PDFPLGPPPPLPPRAPPSRPGEAAVTAAPAGASVSSAS) is disordered. The span at 418 to 433 (PLGPPPPLPPRAPPSR) shows a compositional bias: pro residues. Residues 434 to 452 (PGEAAVTAAPAGASVSSAS) show a composition bias toward low complexity. Residues 456–548 (STLECILYKA…VYPPYLNYLR (93 aa)) are AF1; mediates transcriptional activation. A Glycyl lysine isopeptide (Lys-Gly) (interchain with G-Cter in SUMO) cross-link involves residue lysine 533. 2 consecutive NR C4-type zinc fingers follow at residues 569–589 (CLIC…CGSC) and 605–629 (CAGR…LRKC). The nuclear receptor DNA-binding region spans 569–641 (CLICGDEASG…AGMVLGGRKF (73 aa)). Serine 678 carries the phosphoserine modification. One can recognise an NR LBD domain in the interval 681–915 (QDIQLIPPLI…EFPEMMSEVI (235 aa)). Residues 689–935 (LINLLVSIEP…MVKPLLFHKK (247 aa)) form an AF2; mediates transcriptional activation region. Position 768 (arginine 768) interacts with progesterone.

The protein belongs to the nuclear hormone receptor family. In terms of assembly, interacts with SMARD1 and UNC45A. Interacts with CUEDC2; the interaction promotes ubiquitination, decreases sumoylation, and represses transcriptional activity. Interacts with PIAS3; the interaction promotes sumoylation of PR in a hormone-dependent manner, inhibits DNA-binding, and alters nuclear export. Interacts with SP1; the interaction requires ligand-induced phosphorylation on Ser-345 by ERK1/2-MAPK. Interacts with PRMT2. Interacts with NCOA2 and NCOA1. Interacts with KLF9. Interacts with GTF2B. Phosphorylated on multiple serine sites. Several of these sites are hormone-dependent. Phosphorylation on Ser-294 is highly hormone-dependent and modulates ubiquitination and sumoylation on Lys-388. Phosphorylation on Ser-345 also requires induction by hormone. Basal phosphorylation on Ser-81, Ser-162, Ser-190 and Ser-400 is increased in response to progesterone and can be phosphorylated in vitro by the CDK2-A1 complex. Increased levels of phosphorylation on Ser-400 also in the presence of EGF, heregulin, IGF, PMA and FBS. Phosphorylation at this site by CDK2 is ligand-independent, and increases nuclear translocation and transcriptional activity. Phosphorylation at Ser-162 and Ser-294, but not at Ser-190, is impaired during the G(2)/M phase of the cell cycle. Phosphorylation on Ser-345 by ERK1/2 MAPK is required for interaction with SP1. In terms of processing, sumoylation is hormone-dependent and represses transcriptional activity. Sumoylation on all three sites is enhanced by PIAS3. Desumoylated by SENP1. Sumoylation on Lys-388, the main site of sumoylation, is repressed by ubiquitination on the same site, and modulated by phosphorylation at Ser-294. Post-translationally, ubiquitination is hormone-dependent and represses sumoylation on the same site. Promoted by MAPK-mediated phosphorylation on Ser-294. Ubiquitinated by UBR5, leading to its degradation: UBR5 specifically recognizes and binds ligand-bound PGR when it is not associated with coactivators (NCOAs). In presence of NCOAs, the UBR5-degron is not accessible, preventing its ubiquitination and degradation. Palmitoylated by ZDHHC7 and ZDHHC21. Palmitoylation is required for plasma membrane targeting and for rapid intracellular signaling via ERK and AKT kinases and cAMP generation.

Its subcellular location is the nucleus. It localises to the cytoplasm. Its function is as follows. The steroid hormones and their receptors are involved in the regulation of eukaryotic gene expression and affect cellular proliferation and differentiation in target tissues. Transcriptional activator of several progesteron-dependent promoters in a variety of cell types. Involved in activation of SRC-dependent MAPK signaling on hormone stimulation. The sequence is that of Progesterone receptor (PGR) from Macaca sylvanus (Barbary macaque).